The primary structure comprises 699 residues: Elongation factor G (699 aa).

The region spanning 8–290 is the tr-type G domain; the sequence is ERYRNIGIMA…AVLDYLPSPV (283 aa). GTP is bound by residues 17–24, 88–92, and 142–145; these read AHIDAGKT, DTPGH, and NKMD.

The protein belongs to the TRAFAC class translation factor GTPase superfamily. Classic translation factor GTPase family. EF-G/EF-2 subfamily.

The protein localises to the cytoplasm. Catalyzes the GTP-dependent ribosomal translocation step during translation elongation. During this step, the ribosome changes from the pre-translocational (PRE) to the post-translocational (POST) state as the newly formed A-site-bound peptidyl-tRNA and P-site-bound deacylated tRNA move to the P and E sites, respectively. Catalyzes the coordinated movement of the two tRNA molecules, the mRNA and conformational changes in the ribosome. This is Elongation factor G from Acidithiobacillus ferrooxidans (strain ATCC 23270 / DSM 14882 / CIP 104768 / NCIMB 8455) (Ferrobacillus ferrooxidans (strain ATCC 23270)).